Consider the following 183-residue polypeptide: CyanoP (183 aa).

A signal peptide spans 1–19; the sequence is MLQRFFATALAIFVVLLGG. Residue Cys-20 is the site of N-palmitoyl cysteine attachment. Residue Cys-20 is the site of S-diacylglycerol cysteine attachment. 10 residues coordinate Zn(2+): Asp-31, Asp-34, Asp-54, His-58, Thr-63, Glu-87, Asp-91, His-142, Glu-163, and Glu-164.

The protein belongs to the PsbP family. CyanoP subfamily. Monomer. Present in very small amounts in PSII. Requires Zn(2+) as cofactor.

Its subcellular location is the cellular thylakoid membrane. Functionally, plays a role in the early stages of photosystem II (PSII) assembly; binds to D2 (psbD) and may facilitate its incorporation into PSII. Present in less than 1% of PSII preparations. The chain is CyanoP from Thermosynechococcus vestitus (strain NIES-2133 / IAM M-273 / BP-1).